We begin with the raw amino-acid sequence, 423 residues long: D-threonate kinase (423 aa).

Substrate is bound by residues aspartate 9, arginine 51, and 81 to 84 (KIDS). Residues serine 245, 355-358 (GGDI), and glycine 401 contribute to the ATP site.

This sequence belongs to the four-carbon acid sugar kinase family.

The catalysed reaction is D-threonate + ATP = 4-O-phospho-D-threonate + ADP + H(+). Functionally, catalyzes the ATP-dependent phosphorylation of D-threonate to D-threonate 4-phosphate. Can also phosphorylate 4-hydroxy-L-threonine, with lower efficiency. This side reaction may serve to deal with the toxicity of 4-hydroxy-L-threonine by converting it into 4-hydroxy-L-threonine 4-phosphate, a useful product that can be used by PdxA2. The protein is D-threonate kinase of Salmonella typhimurium (strain LT2 / SGSC1412 / ATCC 700720).